A 509-amino-acid chain; its full sequence is FAD-linked oxidoreductase dpmaF (509 aa).

An N-terminal signal peptide occupies residues 1 to 21; it reads MTRLSLQLIAGLAGQAWLVNS. Residues 59-231 form the FAD-binding PCMH-type domain; it reads LQYEPIAVAV…AEYGFETFPA (173 aa). 3 N-linked (GlcNAc...) asparagine glycosylation sites follow: Asn125, Asn193, and Asn281.

This sequence belongs to the oxygen-dependent FAD-linked oxidoreductase family. The cofactor is FAD.

It functions in the pathway secondary metabolite biosynthesis; terpenoid biosynthesis. FAD-linked oxidoreductase; part of the gene cluster that mediates the biosynthesis of the diterpenoid pyrones subglutinols A and B. The first step of the pathway is the synthesis of the alpha-pyrone moiety by the polyketide synthase dpmaA via condensation of one acetyl-CoA starter unit with 3 malonyl-CoA units and 2 methylations. The alpha-pyrone is then combined with geranylgeranyl pyrophosphate (GGPP) formed by the GGPP synthase dpmaD through the action of the prenyltransferase dpmaC to yield a linear alpha-pyrone diterpenoid. Subsequent steps in the diterpenoid pyrone biosynthetic pathway involve the decalin core formation, which is initiated by the epoxidation of the C10-C11 olefin by the FAD-dependent oxidoreductase dpmaE, and is followed by a cyclization cascade catalyzed by the terpene cyclase dpmaB. The dehydrogenase dpmaF is then involved in tetrahydrofuran (THF) ring formation at the C5 unit to complete the formation of subglutinols A and B. This is FAD-linked oxidoreductase dpmaF from Metarhizium anisopliae (Entomophthora anisopliae).